Reading from the N-terminus, the 306-residue chain is Elongation factor Ts (306 aa).

An involved in Mg(2+) ion dislocation from EF-Tu region spans residues 80–83; it reads TDFV.

Belongs to the EF-Ts family.

The protein resides in the cytoplasm. Its function is as follows. Associates with the EF-Tu.GDP complex and induces the exchange of GDP to GTP. It remains bound to the aminoacyl-tRNA.EF-Tu.GTP complex up to the GTP hydrolysis stage on the ribosome. This is Elongation factor Ts from Methylorubrum populi (strain ATCC BAA-705 / NCIMB 13946 / BJ001) (Methylobacterium populi).